The sequence spans 904 residues: Protein translocase subunit SecA (904 aa).

ATP is bound by residues glutamine 89, 107 to 111, and aspartate 496; that span reads GEGKT. The tract at residues 870-904 is disordered; it reads GGFQELSSGTPSPTVTVTTSSGGGTERKTSRRRKR. Positions 876-889 are enriched in low complexity; sequence SSGTPSPTVTVTTS.

Belongs to the SecA family. Monomer and homodimer. Part of the essential Sec protein translocation apparatus which comprises SecA, SecYEG and auxiliary proteins SecDF. Other proteins may also be involved.

It localises to the cell inner membrane. The protein localises to the cytoplasm. It carries out the reaction ATP + H2O + cellular proteinSide 1 = ADP + phosphate + cellular proteinSide 2.. Its function is as follows. Part of the Sec protein translocase complex. Interacts with the SecYEG preprotein conducting channel. Has a central role in coupling the hydrolysis of ATP to the transfer of proteins into and across the cell membrane, serving as an ATP-driven molecular motor driving the stepwise translocation of polypeptide chains across the membrane. The chain is Protein translocase subunit SecA from Leptospira borgpetersenii serovar Hardjo-bovis (strain L550).